We begin with the raw amino-acid sequence, 102 residues long: Protein RnfH (102 aa).

It belongs to the UPF0125 (RnfH) family.

This Haemophilus influenzae (strain 86-028NP) protein is Protein RnfH.